The chain runs to 316 residues: Methionyl-tRNA formyltransferase (316 aa).

Residue 111–114 coordinates (6S)-5,6,7,8-tetrahydrofolate; sequence GLLP.

This sequence belongs to the Fmt family.

It catalyses the reaction L-methionyl-tRNA(fMet) + (6R)-10-formyltetrahydrofolate = N-formyl-L-methionyl-tRNA(fMet) + (6S)-5,6,7,8-tetrahydrofolate + H(+). Attaches a formyl group to the free amino group of methionyl-tRNA(fMet). The formyl group appears to play a dual role in the initiator identity of N-formylmethionyl-tRNA by promoting its recognition by IF2 and preventing the misappropriation of this tRNA by the elongation apparatus. This chain is Methionyl-tRNA formyltransferase, found in Chlamydia trachomatis serovar A (strain ATCC VR-571B / DSM 19440 / HAR-13).